The chain runs to 472 residues: Ribulose bisphosphate carboxylase large chain (472 aa).

2 residues coordinate substrate: Asn116 and Thr166. Catalysis depends on Lys168, which acts as the Proton acceptor. A substrate-binding site is contributed by Lys170. Mg(2+) is bound by residues Lys194, Asp196, and Glu197. Lys194 carries the post-translational modification N6-carboxylysine. The active-site Proton acceptor is the His287. Substrate-binding residues include Arg288, His320, and Ser372.

It belongs to the RuBisCO large chain family. Type I subfamily. In terms of assembly, heterohexadecamer of 8 large chains and 8 small chains. Mg(2+) is required as a cofactor.

It catalyses the reaction 2 (2R)-3-phosphoglycerate + 2 H(+) = D-ribulose 1,5-bisphosphate + CO2 + H2O. It carries out the reaction D-ribulose 1,5-bisphosphate + O2 = 2-phosphoglycolate + (2R)-3-phosphoglycerate + 2 H(+). In terms of biological role, ruBisCO catalyzes two reactions: the carboxylation of D-ribulose 1,5-bisphosphate, the primary event in carbon dioxide fixation, as well as the oxidative fragmentation of the pentose substrate. Both reactions occur simultaneously and in competition at the same active site. In Nitrobacter vulgaris, this protein is Ribulose bisphosphate carboxylase large chain.